We begin with the raw amino-acid sequence, 131 residues long: Glycine cleavage system H protein (131 aa).

The Lipoyl-binding domain occupies 24 to 106; it reads RVTVGISDHA…YGEGWIFVVE (83 aa). Residue lysine 65 is modified to N6-lipoyllysine.

It belongs to the GcvH family. As to quaternary structure, the glycine cleavage system is composed of four proteins: P, T, L and H. (R)-lipoate is required as a cofactor.

Its function is as follows. The glycine cleavage system catalyzes the degradation of glycine. The H protein shuttles the methylamine group of glycine from the P protein to the T protein. This is Glycine cleavage system H protein from Xanthomonas oryzae pv. oryzae (strain MAFF 311018).